We begin with the raw amino-acid sequence, 487 residues long: N-succinylglutamate 5-semialdehyde dehydrogenase (487 aa).

The tract at residues 1–23 (MTHFIKGQWHTGKGHDVASSNPA) is disordered. Residue 220 to 225 (GSSRTG) participates in NAD(+) binding. Residues glutamate 243 and cysteine 277 contribute to the active site.

The protein belongs to the aldehyde dehydrogenase family. AstD subfamily.

It carries out the reaction N-succinyl-L-glutamate 5-semialdehyde + NAD(+) + H2O = N-succinyl-L-glutamate + NADH + 2 H(+). It participates in amino-acid degradation; L-arginine degradation via AST pathway; L-glutamate and succinate from L-arginine: step 4/5. In terms of biological role, catalyzes the NAD-dependent reduction of succinylglutamate semialdehyde into succinylglutamate. The polypeptide is N-succinylglutamate 5-semialdehyde dehydrogenase (Shewanella oneidensis (strain ATCC 700550 / JCM 31522 / CIP 106686 / LMG 19005 / NCIMB 14063 / MR-1)).